The sequence spans 351 residues: tRNA (guanine(10)-N2)-dimethyltransferase (351 aa).

The region spanning 57–165 (EGHRIIFRYN…ENTFFISNVL (109 aa)) is the THUMP domain.

Belongs to the methyltransferase superfamily. Trm-G10 family. As to quaternary structure, monomer.

The protein localises to the cytoplasm. It carries out the reaction guanosine(10) in tRNA + 2 S-adenosyl-L-methionine = N(2)-dimethylguanosine(10) in tRNA + 2 S-adenosyl-L-homocysteine + 2 H(+). Functionally, catalyzes the adenosylmethionine-dependent methylation of the exocyclic amino group (N(2)) of guanosine at position 10 of various tRNAs. Acts via a two-step process that leads to the formation of either N(2)-monomethyl (m(2)G) or N(2)-dimethylguanosine (m(2)(2)G). In Methanocaldococcus jannaschii (strain ATCC 43067 / DSM 2661 / JAL-1 / JCM 10045 / NBRC 100440) (Methanococcus jannaschii), this protein is tRNA (guanine(10)-N2)-dimethyltransferase (trmG10).